Here is a 163-residue protein sequence, read N- to C-terminus: Beta-carbonic anhydrase 1 (163 aa).

Zn(2+) is bound by residues Cys35, Asp37, His88, and Cys91.

It belongs to the beta-class carbonic anhydrase family. Homotetramer. Zn(2+) serves as cofactor.

The enzyme catalyses hydrogencarbonate + H(+) = CO2 + H2O. Its function is as follows. Catalyzes the reversible hydration of carbon dioxide to form bicarbonate. The sequence is that of Beta-carbonic anhydrase 1 from Mycobacterium bovis (strain ATCC BAA-935 / AF2122/97).